The following is a 165-amino-acid chain: Putative tyrosine-protein phosphatase AMV078 (165 aa).

The Tyrosine-protein phosphatase domain occupies 2 to 149; that stretch reads NISNINNDIY…LKFYNSYKNI (148 aa). C94 (phosphocysteine intermediate) is an active-site residue.

Belongs to the protein-tyrosine phosphatase family. Non-receptor class dual specificity subfamily.

It carries out the reaction O-phospho-L-tyrosyl-[protein] + H2O = L-tyrosyl-[protein] + phosphate. The protein is Putative tyrosine-protein phosphatase AMV078 of Amsacta moorei entomopoxvirus (AmEPV).